A 516-amino-acid chain; its full sequence is Membrane-bound transcription factor site-2 protease (516 aa).

Over 1 to 3 the chain is Cytoplasmic; that stretch reads MIP. The helical transmembrane segment at 4–24 threads the bilayer; it reads VSLVVVVVGGWTAVYLTDLVL. Topologically, residues 25-74 are lumenal; it reads KSSVYFKHSYEDWLENNGLSISPFHIRWQTAVFNRAFYSWGRRKARMLYQ. Helical transmembrane passes span 75 to 95 and 96 to 107; these read WFNF…FLLG and KTLIQTLGQMMA. Residues 108-141 lie on the Lumenal side of the membrane; that stretch reads DSSYSSSSSSSSHSSSSSSSSSSSSSLYNEQVLQ. A helical transmembrane segment spans residues 142–166; sequence VVVPGINLPVNQLTYFFAAVLISGV. His168 provides a ligand contact to Zn(2+). The active site involves Glu169. 3 consecutive transmembrane segments (helical) span residues 171–183, 184–206, and 226–248; these read GHGI…QVRF, NGFG…TTHL, and FILA…PFYY. His172 is a binding site for Zn(2+). Over 249–443 the chain is Lumenal; the sequence is TGVGVLITEV…LPVVVETFVK (195 aa). Asn334 is a glycosylation site (N-linked (GlcNAc...) asparagine). Helical transmembrane passes span 444 to 461 and 462 to 473; these read YLIS…VPCF and ALDGQWILNSFL. Residues 474–489 lie on the Lumenal side of the membrane; the sequence is DATLTSVIGDNDVKDL. A helical membrane pass occupies residues 490–510; the sequence is IGFFILLGGSILLAANVALGL. The Cytoplasmic portion of the chain corresponds to 511 to 516; the sequence is WMVTAR.

Belongs to the peptidase M50A family. Requires Zn(2+) as cofactor.

It is found in the membrane. The protein localises to the cytoplasm. Its subcellular location is the golgi apparatus membrane. It catalyses the reaction Cleaves several transcription factors that are type-2 transmembrane proteins within membrane-spanning domains. Known substrates include sterol regulatory element-binding protein (SREBP) -1, SREBP-2 and forms of the transcriptional activator ATF6. SREBP-2 is cleaved at the site 477-DRSRILL-|-CVLTFLCLSFNPLTSLLQWGGA-505. The residues Asn-Pro, 11 residues distal to the site of cleavage in the membrane-spanning domain, are important for cleavage by S2P endopeptidase. Replacement of either of these residues does not prevent cleavage, but there is no cleavage if both of these residues are replaced.. Zinc metalloprotease that mediates intramembrane proteolysis of proteins such as ATF6, ATF6B, SREBF1/SREBP1 and SREBF2/SREBP2. Catalyzes the second step in the proteolytic activation of the sterol regulatory element-binding proteins (SREBPs) SREBF1/SREBP1 and SREBF2/SREBP2: cleaves SREBPs within the first transmembrane segment, thereby releasing the N-terminal segment with a portion of the transmembrane segment attached. Mature N-terminal SREBP fragments shuttle to the nucleus and activate gene transcription. Also mediates the second step in the proteolytic activation of the cyclic AMP-dependent transcription factor ATF-6 (ATF6 and ATF6B). Involved in intramembrane proteolysis during bone formation. In astrocytes and osteoblasts, upon DNA damage and ER stress, mediates the second step of the regulated intramembrane proteolytic activation of the transcription factor CREB3L1, leading to the inhibition of cell-cycle progression. The sequence is that of Membrane-bound transcription factor site-2 protease from Bos taurus (Bovine).